A 1499-amino-acid chain; its full sequence is DNA-directed RNA polymerase subunit beta' (1499 aa).

Zn(2+) is bound by residues Cys67, Cys69, Cys82, and Cys85. 3 residues coordinate Mg(2+): Asp497, Asp499, and Asp501. Zn(2+) is bound by residues Cys865, Cys940, Cys947, and Cys950. A disordered region spans residues 1475 to 1499 (YEPSQRAYQEDEYAKKEDGEIAIDD). A compositionally biased stretch (basic and acidic residues) spans 1482 to 1493 (YQEDEYAKKEDG).

It belongs to the RNA polymerase beta' chain family. In terms of assembly, the RNAP catalytic core consists of 2 alpha, 1 beta, 1 beta' and 1 omega subunit. When a sigma factor is associated with the core the holoenzyme is formed, which can initiate transcription. The cofactor is Mg(2+). Requires Zn(2+) as cofactor.

The catalysed reaction is RNA(n) + a ribonucleoside 5'-triphosphate = RNA(n+1) + diphosphate. Functionally, DNA-dependent RNA polymerase catalyzes the transcription of DNA into RNA using the four ribonucleoside triphosphates as substrates. The protein is DNA-directed RNA polymerase subunit beta' of Chloroherpeton thalassium (strain ATCC 35110 / GB-78).